Reading from the N-terminus, the 574-residue chain is Hyaluronan synthase 3 (574 aa).

Residues 1 to 15 (MPVSLSTALRVVGTS) lie on the Cytoplasmic side of the membrane. A helical transmembrane segment spans residues 16–36 (LFALAVLGGILAAYVTGYQFI). Residues 37–44 (HTEKHYLS) lie on the Extracellular side of the membrane. A helical membrane pass occupies residues 45–65 (FGLYGAILGLHLFIQSLFAFL). Topologically, residues 66–398 (EHRRMRAERQ…NALWFHKHHL (333 aa)) are cytoplasmic. The helical transmembrane segment at 399-419 (WMTYESVVTGFFPFFLIATVI) threads the bilayer. Residues 420–429 (QLFYRGRIWN) are Extracellular-facing. Residues 430–450 (ILLFLLTVQLVGIIKATYACF) traverse the membrane as a helical segment. Residues 451-456 (LRGSAE) lie on the Cytoplasmic side of the membrane. Residues 457 to 477 (MIFVSLYALLYMSSLLPAKMF) form a helical membrane-spanning segment. Topologically, residues 478 to 494 (AIATINKSGWGTSGRRT) are extracellular. Residues 495–515 (IVVNFVGLLPVSVWAAVLLGG) traverse the membrane as a helical segment. Over 516–530 (LAYTAYSQDLLSDTE) the chain is Cytoplasmic. The chain crosses the membrane as a helical span at residues 531–551 (VAFLISGAVLYACYWVALLTL). The Extracellular segment spans residues 552 to 574 (YLAMVARRCGKRKEQCGLVFAEV).

It belongs to the NodC/HAS family. It depends on Mg(2+) as a cofactor. Post-translationally, O-GlcNAcylation increases the hyaluronan synthase activity, HAS3 stability and its plasma membrane residence. The concentration of UDP-GlcNAc controls the level of O-GlcNAc modification.

It localises to the cell membrane. Its subcellular location is the golgi apparatus membrane. The protein resides in the golgi apparatus. The protein localises to the trans-Golgi network membrane. It is found in the cytoplasmic vesicle. The catalysed reaction is [hyaluronan](n) + UDP-N-acetyl-alpha-D-glucosamine = N-acetyl-beta-D-glucosaminyl-(1-&gt;4)-[hyaluronan](n) + UDP + H(+). It catalyses the reaction N-acetyl-beta-D-glucosaminyl-(1-&gt;4)-[hyaluronan](n) + UDP-alpha-D-glucuronate = [hyaluronan](n+1) + UDP + H(+). Its pathway is glycan biosynthesis; hyaluronan biosynthesis. In terms of biological role, catalyzes the addition of GlcNAc or GlcUA monosaccharides to the nascent hyaluronan polymer. Therefore, it is essential to hyaluronan synthesis a major component of most extracellular matrices that has a structural role in tissues architectures and regulates cell adhesion, migration and differentiation. This is one of three isoenzymes responsible for cellular hyaluronan synthesis. This is Hyaluronan synthase 3 (HAS3) from Gallus gallus (Chicken).